The primary structure comprises 544 residues: MQNKPSFILRNPSANKGTGFNNEEREKLGLKGLLPPKVESLQEQSDRALSQFTSFNTNLERYIFLNCLRDRNETLFYYLLSNNLELMMPIIYTPTVGEACQKFGNEFRFAQGMYFASQDKGNIRAMMDNWPAEGVDIIVVSDGSRILGLGDLGTNGMGIPVGKLQLYVAGAGFCPTRTLPVIIDSGTNTKKYLEDKYYLGERHPRIPDSEYYPLVDEFLAAAFNKWPKVIVQFEDISNDHCFNLLDEYRNKYLCFNDDIQGTGSVILSGFINAVRSVQKPIKEHRMVFLGAGSAGIGVADCIMSLFDEAGVSKEEARKSFWFVDSKGLITTTRGDELTSQKKQYAREDYTYQLKSLLEVVRDVKPTAIIGLSGIGGSFSQEVIEEMAKHVEKPIVFALSNPTTNAECTAEQAYQWTDGRCIFASGSPFKPVEYKGKTFVPGQGNNMYIFPGLGLAASVCEAKHVTDAMIITAAKTLASFVEDSEVLTGKIYPGLQHIREISTRIAVKVIEKAYEEGMAQLPRPDNIEALVKSRQYVPSYDKSKN.

The tract at residues Met-1–Asn-22 is disordered. Residues Pro-12–Asn-21 are compositionally biased toward polar residues. Catalysis depends on Tyr-92, which acts as the Proton donor. Arg-145 provides a ligand contact to NAD(+). Lys-163 serves as the catalytic Proton acceptor. A divalent metal cation contacts are provided by Glu-234, Asp-235, and Asp-258. Asp-258 serves as a coordination point for NAD(+). NADP(+) is bound at residue Val-287–Met-303. Residue Asn-400 coordinates NAD(+).

The protein belongs to the malic enzymes family. In terms of assembly, homotetramer. It depends on Mg(2+) as a cofactor. Requires Mn(2+) as cofactor. Expressed in the fruiting body.

It localises to the cytoplasm. It carries out the reaction (S)-malate + NADP(+) = pyruvate + CO2 + NADPH. The catalysed reaction is oxaloacetate + H(+) = pyruvate + CO2. This is NADP-dependent malic enzyme (malA) from Dictyostelium discoideum (Social amoeba).